Reading from the N-terminus, the 100-residue chain is Replication restart protein PriB (100 aa).

An SSB domain is found at 1-100 (MTNRMELSGT…VLHADDIIHI (100 aa)).

The protein belongs to the PriB family. In terms of assembly, homodimer. Interacts with PriA and DnaT. Component of the replication restart primosome. Primosome assembly occurs via a 'hand-off' mechanism. PriA binds to replication forks, subsequently PriB then DnaT bind; DnaT then displaces ssDNA to generate the helicase loading substrate.

Functionally, involved in the restart of stalled replication forks, which reloads the replicative helicase on sites other than the origin of replication; the PriA-PriB pathway is the major replication restart pathway. During primosome assembly it facilitates complex formation between PriA and DnaT on DNA; stabilizes PriA on DNA. Stimulates the DNA unwinding activity of PriA helicase. This chain is Replication restart protein PriB, found in Vibrio vulnificus (strain CMCP6).